We begin with the raw amino-acid sequence, 729 residues long: Sodium-dependent neutral amino acid transporter B(0)AT2 (729 aa).

Over 1–69 (MPKNSKVVKR…ERPAWNSKLQ (69 aa)) the chain is Cytoplasmic. A phosphoserine mark is found at Ser-25 and Ser-55. A run of 3 helical transmembrane segments spans residues 70–90 (YILAQVGFSVGLGNVWRFPYL), 98–117 (AYLLPYLILLLVIGIPLFFL), and 142–162 (GIGFASCVVCYFVALYYNVII). The Extracellular portion of the chain corresponds to 163–225 (GWTLFYFSQS…SSISESGGLN (63 aa)). Asn-187 carries an N-linked (GlcNAc...) asparagine glycan. Transmembrane regions (helical) follow at residues 226 to 244 (WKMTGCLLAAWVMVCLAMI), 253 to 270 (IMYFSSLFPYVVLICFLI), 306 to 323 (VFFALGLGFGGVIAFSSY), and 335 to 356 (VLVSFINFFTSVLATLVVFAVL). Residues 357 to 452 (GFKANIVNEK…FIAFTEAMTH (96 aa)) are Extracellular-facing. 2 N-linked (GlcNAc...) asparagine glycosylation sites follow: Asn-383 and Asn-394. 5 helical membrane-spanning segments follow: residues 453–472 (FPASPFWSVMFFLMLINLGL), 496–514 (ILTVICCLLAFCIGLMFVQ), 530–550 (TLPLLIVVILENIAVSFVYGI), 571–592 (YMWKYISPLMLVTLLIASIVNM), and 620–642 (VVCFSLMVLAILPVPVVFVIRRC). At 643–729 (NLIDDSSGNL…DMPDMPESDL (87 aa)) the chain is on the cytoplasmic side. Phosphoserine occurs at positions 687, 699, and 701.

This sequence belongs to the sodium:neurotransmitter symporter (SNF) (TC 2.A.22) family. SLC6A15 subfamily. As to expression, widely distributed in the central nervous system, including the olfactory bulb, the hypothalamus, the cerebral cortex, the hippocampus, and the cerebellum. In addition, intense expression is found in the motor nuclei including the oculomotor nucleus, abducens nucleus, trigeminal motor nucleus, facial nucleus, hypoglossal nucleus and ventral horn of spinal cord. Intense hybridization signals are also observed in the nuclei containing monoaminergic neurons, such as locus coeruleus, the substantia nigra pars compacta, the ventral tegmental area, the dorsal raphe nucleus and the median raphe nucleus.

The protein localises to the membrane. The enzyme catalyses L-leucine(in) + Na(+)(in) = L-leucine(out) + Na(+)(out). It carries out the reaction L-isoleucine(in) + Na(+)(in) = L-isoleucine(out) + Na(+)(out). It catalyses the reaction L-methionine(in) + Na(+)(in) = L-methionine(out) + Na(+)(out). The catalysed reaction is L-proline(in) + Na(+)(in) = L-proline(out) + Na(+)(out). The enzyme catalyses L-alanine(in) + Na(+)(in) = L-alanine(out) + Na(+)(out). It carries out the reaction L-asparagine(in) + Na(+)(in) = L-asparagine(out) + Na(+)(out). It catalyses the reaction L-valine(in) + Na(+)(in) = L-valine(out) + Na(+)(out). The catalysed reaction is L-cysteine(in) + Na(+)(in) = L-cysteine(out) + Na(+)(out). The enzyme catalyses L-glutamine(in) + Na(+)(in) = L-glutamine(out) + Na(+)(out). It carries out the reaction L-serine(in) + Na(+)(in) = L-serine(out) + Na(+)(out). It catalyses the reaction L-threonine(in) + Na(+)(in) = L-threonine(out) + Na(+)(out). The catalysed reaction is L-pipecolate(in) + Na(+)(in) = L-pipecolate(out) + Na(+)(out). The enzyme catalyses L-phenylalanine(in) + Na(+)(in) = L-phenylalanine(out) + Na(+)(out). Its function is as follows. Functions as a sodium-dependent neutral amino acid transporter. Exhibits preference for the branched-chain amino acids, particularly leucine, valine and isoleucine and methionine. Can also transport low-affinity substrates such as alanine, phenylalanine, glutamine and pipecolic acid. Mediates the saturable, pH-sensitive and electrogenic cotransport of proline and sodium ions with a stoichiometry of 1:1. May have a role as transporter for neurotransmitter precursors into neurons. In contrast to other members of the neurotransmitter transporter family, does not appear to be chloride-dependent. This is Sodium-dependent neutral amino acid transporter B(0)AT2 (Slc6a15) from Rattus norvegicus (Rat).